We begin with the raw amino-acid sequence, 227 residues long: PKHD-type hydroxylase ABSDF3031 (227 aa).

One can recognise a Fe2OG dioxygenase domain in the interval 78–178 (KIIPPLFNRY…RFASFFWVQS (101 aa)). Residues histidine 96, aspartate 98, and histidine 159 each coordinate Fe cation. Arginine 169 provides a ligand contact to 2-oxoglutarate.

It depends on Fe(2+) as a cofactor. Requires L-ascorbate as cofactor.

The protein is PKHD-type hydroxylase ABSDF3031 of Acinetobacter baumannii (strain SDF).